The primary structure comprises 214 residues: ATP-dependent Clp protease proteolytic subunit (214 aa).

Residue serine 110 is the Nucleophile of the active site. Histidine 135 is an active-site residue.

This sequence belongs to the peptidase S14 family. In terms of assembly, fourteen ClpP subunits assemble into 2 heptameric rings which stack back to back to give a disk-like structure with a central cavity, resembling the structure of eukaryotic proteasomes.

It is found in the cytoplasm. The enzyme catalyses Hydrolysis of proteins to small peptides in the presence of ATP and magnesium. alpha-casein is the usual test substrate. In the absence of ATP, only oligopeptides shorter than five residues are hydrolyzed (such as succinyl-Leu-Tyr-|-NHMec, and Leu-Tyr-Leu-|-Tyr-Trp, in which cleavage of the -Tyr-|-Leu- and -Tyr-|-Trp bonds also occurs).. Functionally, cleaves peptides in various proteins in a process that requires ATP hydrolysis. Has a chymotrypsin-like activity. Plays a major role in the degradation of misfolded proteins. This chain is ATP-dependent Clp protease proteolytic subunit, found in Legionella pneumophila (strain Paris).